Here is a 149-residue protein sequence, read N- to C-terminus: MERTFIAIKPDGVQRGLVGEILQRFERRGFKLVGLKLMQVSEALAQKHYAEHKERPFFGGLVAFITSSPVVAVVLEGKGVVATARAMMGVTNPLNSPLGTIRGDYGIDIGRNIIHGSDSLESAEREIALWFAPAELLEWQATLGSWVYE.

The ATP site is built by Lys-9, Phe-57, Arg-85, Thr-91, Arg-102, and Asn-112. The active-site Pros-phosphohistidine intermediate is His-115.

This sequence belongs to the NDK family. Homotetramer. It depends on Mg(2+) as a cofactor.

The protein localises to the cytoplasm. The catalysed reaction is a 2'-deoxyribonucleoside 5'-diphosphate + ATP = a 2'-deoxyribonucleoside 5'-triphosphate + ADP. It catalyses the reaction a ribonucleoside 5'-diphosphate + ATP = a ribonucleoside 5'-triphosphate + ADP. Functionally, major role in the synthesis of nucleoside triphosphates other than ATP. The ATP gamma phosphate is transferred to the NDP beta phosphate via a ping-pong mechanism, using a phosphorylated active-site intermediate. This is Nucleoside diphosphate kinase from Gloeobacter violaceus (strain ATCC 29082 / PCC 7421).